The following is a 235-amino-acid chain: Putative cobalt transport protein CbiM 2 (235 aa).

7 consecutive transmembrane segments (helical) span residues 9–29 (PAGW…MGII), 41–61 (YLPL…LKLP), 80–100 (FGYC…ALLL), 107–127 (TMGA…YAVY), 135–155 (INIY…TYII), 160–180 (LALA…AFFS), and 181–201 (IFAI…ALVF).

This sequence belongs to the CbiM family. Forms an energy-coupling factor (ECF) transporter complex composed of an ATP-binding protein (A component, CbiO), a transmembrane protein (T component, CbiQ) and 2 possible substrate-capture proteins (S components, CbiM and CbiN) of unknown stoichimetry.

It localises to the cell membrane. It participates in cofactor biosynthesis; adenosylcobalamin biosynthesis. Functionally, part of the energy-coupling factor (ECF) transporter complex CbiMNOQ involved in cobalt import. This chain is Putative cobalt transport protein CbiM 2, found in Methanosphaerula palustris (strain ATCC BAA-1556 / DSM 19958 / E1-9c).